Here is a 1295-residue protein sequence, read N- to C-terminus: Phosphoribosylformylglycinamidine synthase (1295 aa).

Residues 302–327 (APFSGAATGSGGEIRDEGATGRGSKP) form a disordered region. Residues 306 to 317 (GAATGSGGEIRD) and Ala-677 contribute to the ATP site. Mg(2+) contacts are provided by Asp-678, Glu-717, Asn-721, and Asp-884. Ser-886 is an ATP binding site. A Glutamine amidotransferase type-1 domain is found at 1042–1295 (MAILREQGVN…MFRNARVYLG (254 aa)). Cys-1135 (nucleophile) is an active-site residue. Residues His-1260 and Glu-1262 contribute to the active site.

In the N-terminal section; belongs to the FGAMS family. In terms of assembly, monomer.

Its subcellular location is the cytoplasm. It catalyses the reaction N(2)-formyl-N(1)-(5-phospho-beta-D-ribosyl)glycinamide + L-glutamine + ATP + H2O = 2-formamido-N(1)-(5-O-phospho-beta-D-ribosyl)acetamidine + L-glutamate + ADP + phosphate + H(+). Its pathway is purine metabolism; IMP biosynthesis via de novo pathway; 5-amino-1-(5-phospho-D-ribosyl)imidazole from N(2)-formyl-N(1)-(5-phospho-D-ribosyl)glycinamide: step 1/2. In terms of biological role, phosphoribosylformylglycinamidine synthase involved in the purines biosynthetic pathway. Catalyzes the ATP-dependent conversion of formylglycinamide ribonucleotide (FGAR) and glutamine to yield formylglycinamidine ribonucleotide (FGAM) and glutamate. In Pseudoalteromonas atlantica (strain T6c / ATCC BAA-1087), this protein is Phosphoribosylformylglycinamidine synthase.